Here is a 273-residue protein sequence, read N- to C-terminus: Spore development regulator vosA (273 aa).

The span at Ser66 to Gln75 shows a compositional bias: low complexity. Residues Ser66–Ala86 are disordered. In terms of domain architecture, Velvet spans Glu70–Lys253. The short motif at Phe211–Lys218 is the Nuclear localization signal element. The segment covering Lys254–Arg267 has biased composition (basic and acidic residues). Residues Lys254–Asp273 form a disordered region.

This sequence belongs to the velvet family. VosA subfamily. Forms a heterodimeric complex with velB; the formation of the velB-vosA complex is light-dependent.

It localises to the nucleus. In terms of biological role, component of the velB-vosA heterodimeric complex that plays a dual role in activating genes associated with spore maturation and repressing certain development-associated genes. The complex binds DNA through the DNA-binding domain of vosA that recognizes an 11-nucleotide consensus sequence 5'-CTGGCCGCGGC-3' consisting of two motifs in the promoters of key developmental regulatory genes. Positively regulates the expression of wetA and represses abaA and brlA. Acts as a crucial regulator of both conidiation capacity and conidial quality. Responsible for the synthesis and accumulation of intracellular trehalose. The chain is Spore development regulator vosA from Beauveria bassiana (strain ARSEF 2860) (White muscardine disease fungus).